The chain runs to 205 residues: Fibrillarin-like rRNA/tRNA 2'-O-methyltransferase (205 aa).

S-adenosyl-L-methionine contacts are provided by residues 60 to 61 (ST), 76 to 77 (EF), 101 to 102 (DA), and 121 to 124 (DIAQ).

It belongs to the methyltransferase superfamily. Fibrillarin family. Interacts with nop5. Component of box C/D small ribonucleoprotein (sRNP) particles that contain rpl7ae, FlpA and nop5, plus a guide RNA.

Involved in pre-rRNA and tRNA processing. Utilizes the methyl donor S-adenosyl-L-methionine to catalyze the site-specific 2'-hydroxyl methylation of ribose moieties in rRNA and tRNA. Site specificity is provided by a guide RNA that base pairs with the substrate. Methylation occurs at a characteristic distance from the sequence involved in base pairing with the guide RNA. The polypeptide is Fibrillarin-like rRNA/tRNA 2'-O-methyltransferase (Methanospirillum hungatei JF-1 (strain ATCC 27890 / DSM 864 / NBRC 100397 / JF-1)).